The primary structure comprises 228 residues: Lipoprotein-releasing system ATP-binding protein LolD 2 (228 aa).

The region spanning arginine 9 to valine 228 is the ABC transporter domain. Residue glycine 42–serine 49 coordinates ATP.

It belongs to the ABC transporter superfamily. Lipoprotein translocase (TC 3.A.1.125) family. As to quaternary structure, the complex is composed of two ATP-binding proteins (LolD) and two transmembrane proteins (LolC and LolE).

The protein localises to the cell inner membrane. Functionally, part of the ABC transporter complex LolCDE involved in the translocation of mature outer membrane-directed lipoproteins, from the inner membrane to the periplasmic chaperone, LolA. Responsible for the formation of the LolA-lipoprotein complex in an ATP-dependent manner. This is Lipoprotein-releasing system ATP-binding protein LolD 2 from Caulobacter vibrioides (strain ATCC 19089 / CIP 103742 / CB 15) (Caulobacter crescentus).